We begin with the raw amino-acid sequence, 483 residues long: Cobyric acid synthase (483 aa).

The GATase cobBQ-type domain maps to 251–438; sequence ALIVAVPMLP…LHGVFSADRF (188 aa). Residue cysteine 333 is the Nucleophile of the active site. The active site involves histidine 430.

This sequence belongs to the CobB/CobQ family. CobQ subfamily.

The protein operates within cofactor biosynthesis; adenosylcobalamin biosynthesis. Its function is as follows. Catalyzes amidations at positions B, D, E, and G on adenosylcobyrinic A,C-diamide. NH(2) groups are provided by glutamine, and one molecule of ATP is hydrogenolyzed for each amidation. The chain is Cobyric acid synthase from Brucella canis (strain ATCC 23365 / NCTC 10854 / RM-666).